A 129-amino-acid polypeptide reads, in one-letter code: MSHLQNLLLDTLLGTKHVDSAALIKLQERSLCVASPGFSVMPSDVRTLVNGFAKNPLKTRREGLYFKEKDYKCVRADDYSLYAKNENTGVIVVKTHLYLLVATYSEGMYPSVCVEATEKLGDYLRRKGN.

This sequence belongs to the profilin family.

It is found in the cytoplasm. In terms of biological role, involved in male fertility. Required for manchette development and acrosome biogenesis during spermiogenesis. Binds in vitro to phospholipids, including phosphatidylinositol 3-phosphate (PtdIns(3)P), phosphatidylinositol 4,5-bisphosphate (PtdIns(4,5)P2), phosphatidylinositol 4-phosphate (PtdIns(4)P) and phosphatidic acid (PA). Contrary to other profilin family members, does not bind to actin in vitro. This Bos taurus (Bovine) protein is Profilin-4 (PFN4).